Reading from the N-terminus, the 178-residue chain is Caveolin-1 (178 aa).

Residue Ser-2 is modified to N-acetylserine. Ser-2 carries the phosphoserine modification. Positions 2 to 94 (SGGKYIDSEG…WKASFTTFTV (93 aa)) are required for homooligomerization. Over 2-104 (SGGKYIDSEG…TKYWFYRLLS (103 aa)) the chain is Cytoplasmic. Residue Lys-5 is modified to N6-acetyllysine; alternate. Residue Lys-5 forms a Glycyl lysine isopeptide (Lys-Gly) (interchain with G-Cter in ubiquitin); alternate linkage. The residue at position 6 (Tyr-6) is a Phosphotyrosine. The residue at position 9 (Ser-9) is a Phosphoserine. Tyr-14 is modified (phosphotyrosine; by ABL1). The residue at position 25 (Tyr-25) is a Phosphotyrosine. Residues Lys-26, Lys-30, Lys-39, Lys-47, and Lys-57 each participate in a glycyl lysine isopeptide (Lys-Gly) (interchain with G-Cter in ubiquitin) cross-link. Residues 82-94 (DGIWKASFTTFTV) are interaction with CAVIN3. The helical intramembrane region spans 105–125 (ALFGIPMALIWGIYFAILSFL). At 126–178 (HIWAVVPCIRSYLIEIQCISRIYSICIHTFCDPLFEAIGKIFSNVRIALQKEI) the chain is on the cytoplasmic side. The tract at residues 131-142 (VPCIRSYLIEIQ) is interacts with SPRY1, SPRY2, SPRY3 and SPRY4. 3 S-palmitoyl cysteine lipidation sites follow: Cys-133, Cys-143, and Cys-156. Residues 149–160 (SICIHTFCDPLF) form an interacts with SPRY1, SPRY2, and SPRY4 region. Residues 167–178 (FSNVRIALQKEI) are interacts with SPRY1, SPRY2, SPRY3 and SPRY4.

Belongs to the caveolin family. Homooligomer. Interacts with GLIPR2. Interacts with NOSTRIN. Interacts with SNAP25 and STX1A. Interacts (via the N-terminus) with DPP4; the interaction is direct. Interacts with CTNNB1, CDH1 and JUP. Interacts with PACSIN2; this interaction induces membrane tubulation. Interacts with SLC7A9. Interacts with BMX and BTK. Interacts with TGFBR1. Interacts with CAVIN3 (via leucine-zipper domain) in a cholesterol-sensitive manner. Interacts with CAVIN1. Interacts with EHD2 in a cholesterol-dependent manner. Forms a ternary complex with UBXN6 and VCP; mediates CAV1 targeting to lysosomes for degradation. Interacts with ABCG1; this interaction regulates ABCG1-mediated cholesterol efflux. Interacts with NEU3; this interaction enhances NEU3 sialidase activity within caveola. Interacts (via C-terminus) with SPRY1, SPRY2 (via C-terminus), SPRY3, and SPRY4. Interacts with IGFBP5; this interaction allows trafficking of IGFBP5 from the plasma membrane to the nucleus. In terms of processing, phosphorylated at Tyr-14 by ABL1 in response to oxidative stress. Ubiquitinated. Undergo monoubiquitination and multi- and/or polyubiquitination. Monoubiquitination of N-terminal lysines promotes integration in a ternary complex with UBXN6 and VCP which promotes oligomeric CAV1 targeting to lysosomes for degradation. Ubiquitinated by ZNRF1; leading to degradation and modulation of the TLR4-mediated immune response.

It localises to the golgi apparatus membrane. The protein localises to the cell membrane. Its subcellular location is the membrane. It is found in the caveola. The protein resides in the membrane raft. Functionally, may act as a scaffolding protein within caveolar membranes. Forms a stable heterooligomeric complex with CAV2 that targets to lipid rafts and drives caveolae formation. Mediates the recruitment of CAVIN proteins (CAVIN1/2/3/4) to the caveolae. Interacts directly with G-protein alpha subunits and can functionally regulate their activity. Involved in the costimulatory signal essential for T-cell receptor (TCR)-mediated T-cell activation. Its binding to DPP4 induces T-cell proliferation and NF-kappa-B activation in a T-cell receptor/CD3-dependent manner. Recruits CTNNB1 to caveolar membranes and may regulate CTNNB1-mediated signaling through the Wnt pathway. Negatively regulates TGFB1-mediated activation of SMAD2/3 by mediating the internalization of TGFBR1 from membrane rafts leading to its subsequent degradation. Binds 20(S)-hydroxycholesterol (20(S)-OHC). This chain is Caveolin-1 (CAV1), found in Didelphis virginiana (North American opossum).